A 185-amino-acid polypeptide reads, in one-letter code: Biogenesis of lysosome-related organelles complex 1 subunit 5 (185 aa).

Polar residues predominate over residues 1 to 16 (MSSSNSPVKSTGSPFI). Residues 1 to 24 (MSSSNSPVKSTGSPFIQSLKPRDN) are disordered. Positions 98 to 182 (MQDQLASVLK…VTMEKELSKQ (85 aa)) form a coiled coil.

Belongs to the BLOC1S5 family. In terms of assembly, component of the biogenesis of lysosome-related organelles complex 1 (BLOC-1).

In terms of biological role, component of the BLOC-1 complex, a complex that is required for normal biogenesis of lysosome-related organelles (LRO), such as platelet dense granules and melanosomes. Plays a role in intracellular vesicle trafficking. In Xenopus tropicalis (Western clawed frog), this protein is Biogenesis of lysosome-related organelles complex 1 subunit 5 (bloc1s5).